Consider the following 421-residue polypeptide: UDP-N-acetylglucosamine 1-carboxyvinyltransferase (421 aa).

22–23 (KN) contributes to the phosphoenolpyruvate binding site. Arg93 contributes to the UDP-N-acetyl-alpha-D-glucosamine binding site. Catalysis depends on Cys117, which acts as the Proton donor. Cys117 bears the 2-(S-cysteinyl)pyruvic acid O-phosphothioketal mark. UDP-N-acetyl-alpha-D-glucosamine is bound by residues 122–126 (RPVDL), Asp308, and Ile330.

This sequence belongs to the EPSP synthase family. MurA subfamily.

It is found in the cytoplasm. The enzyme catalyses phosphoenolpyruvate + UDP-N-acetyl-alpha-D-glucosamine = UDP-N-acetyl-3-O-(1-carboxyvinyl)-alpha-D-glucosamine + phosphate. It functions in the pathway cell wall biogenesis; peptidoglycan biosynthesis. Its function is as follows. Cell wall formation. Adds enolpyruvyl to UDP-N-acetylglucosamine. The protein is UDP-N-acetylglucosamine 1-carboxyvinyltransferase of Pseudomonas putida (strain GB-1).